We begin with the raw amino-acid sequence, 339 residues long: Mycothiol acetyltransferase (339 aa).

N-acetyltransferase domains lie at Y8 to T174 and L176 to N339. Residue E39 coordinates 1D-myo-inositol 2-(L-cysteinylamino)-2-deoxy-alpha-D-glucopyranoside. Position 85-87 (L85–V87) interacts with acetyl-CoA. The 1D-myo-inositol 2-(L-cysteinylamino)-2-deoxy-alpha-D-glucopyranoside site is built by E207, K254, and E270. Acetyl-CoA is bound at residue V274 to L276. Y308 is a 1D-myo-inositol 2-(L-cysteinylamino)-2-deoxy-alpha-D-glucopyranoside binding site.

This sequence belongs to the acetyltransferase family. MshD subfamily. Monomer.

The enzyme catalyses 1D-myo-inositol 2-(L-cysteinylamino)-2-deoxy-alpha-D-glucopyranoside + acetyl-CoA = mycothiol + CoA + H(+). In terms of biological role, catalyzes the transfer of acetyl from acetyl-CoA to desacetylmycothiol (Cys-GlcN-Ins) to form mycothiol. The protein is Mycothiol acetyltransferase of Corynebacterium urealyticum (strain ATCC 43042 / DSM 7109).